The sequence spans 598 residues: UvrABC system protein C (598 aa).

The 78-residue stretch at 14 to 91 (DSPGCYLHKD…IQKNMPKYNI (78 aa)) folds into the GIY-YIG domain. Positions 196 to 231 (DKIIEDLRSKMLAASEEMAFERAAEYRDLISGIATM) constitute a UVR domain.

It belongs to the UvrC family. As to quaternary structure, interacts with UvrB in an incision complex.

It localises to the cytoplasm. Its function is as follows. The UvrABC repair system catalyzes the recognition and processing of DNA lesions. UvrC both incises the 5' and 3' sides of the lesion. The N-terminal half is responsible for the 3' incision and the C-terminal half is responsible for the 5' incision. This chain is UvrABC system protein C, found in Streptococcus pyogenes serotype M18 (strain MGAS8232).